We begin with the raw amino-acid sequence, 109 residues long: Transmembrane protein 233 (109 aa).

The segment at 1–30 (MSQYAPSPDFKRALDSSPEANTEDDKTEED) is disordered. The Cytoplasmic segment spans residues 1–41 (MSQYAPSPDFKRALDSSPEANTEDDKTEEDVPMPKNYLWLT). Over residues 21-30 (NTEDDKTEED) the composition is skewed to acidic residues. The segment at residues 42–62 (IVSCFCPAYPINIVALVFSIM) is an intramembrane region (helical). Over 63-84 (SLNSYNDGDYEGARRLGRNAKW) the chain is Cytoplasmic. Residues 85–105 (VAIASIIIGLLIIGISCAVHF) form a helical membrane-spanning segment. Over 106-109 (TRNA) the chain is Extracellular.

This sequence belongs to the CD225/Dispanin family. In terms of assembly, interacts with the giant stinging tree toxin ExTxA (AC P0DQP3). Interacts with Nav1.7/SCN9A. Interacts with Nav1.1/SCN1A, Nav1.2/SCN2A, Nav1.3/SCN3A, Nav1.4/SCN4A, Nav1.5/SCN5A, and Nav1.6/SCN8A.

It is found in the cell membrane. Functionally, probable accessory protein of voltage-gated sodium channels. This is Transmembrane protein 233 from Homo sapiens (Human).